Reading from the N-terminus, the 392-residue chain is FK506-binding protein 4 (392 aa).

Disordered stretches follow at residues 58–116 and 161–284; these read NPEL…NEID and GNYV…PKTK. 3 stretches are compositionally biased toward acidic residues: residues 73–86, 104–116, and 172–219; these read DGLEEDESESEQEA, SESEDSEDENEID, and SDSD…DASD. A phosphoserine mark is found at Ser-80 and Ser-82. Composition is skewed to basic and acidic residues over residues 220 to 234 and 252 to 279; these read IESRLDELVKKDEKK and SAKPAEKKQTTKKDKKAEKVKDSEESKP. The 87-residue stretch at 306–392 folds into the PPIase FKBP-type domain; that stretch reads GTRVGMRYVG…TFDVKLVSMK (87 aa).

The protein belongs to the FKBP-type PPIase family. FKBP3/4 subfamily. As to quaternary structure, binds to histones H3 and H4. Interacts with NOP53.

The protein localises to the nucleus. The enzyme catalyses [protein]-peptidylproline (omega=180) = [protein]-peptidylproline (omega=0). Functionally, PPIase that acts as a histone chaperone. Histone proline isomerase that increases the rate of cis-trans isomerization at 'Pro-17' (H3P16), 'Pro-31' (H3P30) and 'Pro-39 (H3P38) on the histone H3 N-terminal tail. H3P16 and H3P30 are the major proline targets with little activity shown against H3P38. H3P38 isomerization influences SET2-mediated H3K36 methylation thereby regulating gene expression. The sequence is that of FK506-binding protein 4 from Saccharomyces cerevisiae (strain ATCC 204508 / S288c) (Baker's yeast).